A 98-amino-acid chain; its full sequence is Cystatin-B (98 aa).

Met-1 carries the post-translational modification N-acetylmethionine. A Secondary area of contact motif is present at residues 46 to 50 (QLVAG).

Belongs to the cystatin family. As to quaternary structure, able to form dimers stabilized by noncovalent forces.

It localises to the cytoplasm. In terms of biological role, this is an intracellular thiol proteinase inhibitor. The protein is Cystatin-B (CSTB) of Bos taurus (Bovine).